The following is an 83-amino-acid chain: Putative membrane protein insertion efficiency factor (83 aa).

Positions 63-83 (GGNDPVPDHFSLRRNKTDISD) are disordered. Basic and acidic residues predominate over residues 68–83 (VPDHFSLRRNKTDISD).

This sequence belongs to the UPF0161 family.

Its subcellular location is the cell membrane. Its function is as follows. Could be involved in insertion of integral membrane proteins into the membrane. This is Putative membrane protein insertion efficiency factor from Streptococcus agalactiae serotype III (strain NEM316).